A 127-amino-acid polypeptide reads, in one-letter code: Large-conductance mechanosensitive channel (127 aa).

3 consecutive transmembrane segments (helical) span residues 9–29, 32–52, and 75–95; these read EFAM…GVAF, IVTA…LGGV, and VIDF…INLL.

Belongs to the MscL family. As to quaternary structure, homopentamer.

It localises to the cell inner membrane. In terms of biological role, channel that opens in response to stretch forces in the membrane lipid bilayer. May participate in the regulation of osmotic pressure changes within the cell. The protein is Large-conductance mechanosensitive channel of Legionella pneumophila (strain Lens).